A 371-amino-acid polypeptide reads, in one-letter code: Queuine tRNA-ribosyltransferase (371 aa).

Asp90 (proton acceptor) is an active-site residue. Residues 90-94, Asp144, Gln189, and Gly215 contribute to the substrate site; that span reads DSGGF. An RNA binding region spans residues 246-252; it reads GVGTPEN. Asp265 serves as the catalytic Nucleophile. Residues 270–274 are RNA binding; important for wobble base 34 recognition; sequence TRNAR. The Zn(2+) site is built by Cys303, Cys305, Cys308, and His334.

This sequence belongs to the queuine tRNA-ribosyltransferase family. Homodimer. Within each dimer, one monomer is responsible for RNA recognition and catalysis, while the other monomer binds to the replacement base PreQ1. Requires Zn(2+) as cofactor.

The catalysed reaction is 7-aminomethyl-7-carbaguanine + guanosine(34) in tRNA = 7-aminomethyl-7-carbaguanosine(34) in tRNA + guanine. The protein operates within tRNA modification; tRNA-queuosine biosynthesis. Catalyzes the base-exchange of a guanine (G) residue with the queuine precursor 7-aminomethyl-7-deazaguanine (PreQ1) at position 34 (anticodon wobble position) in tRNAs with GU(N) anticodons (tRNA-Asp, -Asn, -His and -Tyr). Catalysis occurs through a double-displacement mechanism. The nucleophile active site attacks the C1' of nucleotide 34 to detach the guanine base from the RNA, forming a covalent enzyme-RNA intermediate. The proton acceptor active site deprotonates the incoming PreQ1, allowing a nucleophilic attack on the C1' of the ribose to form the product. After dissociation, two additional enzymatic reactions on the tRNA convert PreQ1 to queuine (Q), resulting in the hypermodified nucleoside queuosine (7-(((4,5-cis-dihydroxy-2-cyclopenten-1-yl)amino)methyl)-7-deazaguanosine). The protein is Queuine tRNA-ribosyltransferase of Helicobacter pylori (strain J99 / ATCC 700824) (Campylobacter pylori J99).